We begin with the raw amino-acid sequence, 99 residues long: Nucleoid-associated protein SEQ_0368 (99 aa).

Belongs to the YbaB/EbfC family. Homodimer.

The protein resides in the cytoplasm. The protein localises to the nucleoid. In terms of biological role, binds to DNA and alters its conformation. May be involved in regulation of gene expression, nucleoid organization and DNA protection. The polypeptide is Nucleoid-associated protein SEQ_0368 (Streptococcus equi subsp. equi (strain 4047)).